We begin with the raw amino-acid sequence, 411 residues long: Translation initiation factor 2 subunit gamma (411 aa).

Positions 9-203 constitute a tr-type G domain; the sequence is QAEVNIGMVG…AIEEFIPTPK (195 aa). The segment at 18–25 is G1; the sequence is GHVDHGKT. Residues D21, T25, G46, and T48 each contribute to the Mg(2+) site. Position 21–26 (21–26) interacts with GTP; it reads DHGKTT. The segment at 46 to 50 is G2; the sequence is GITIK. The Zn(2+) site is built by C61, C64, C73, and C76. The interval 90–93 is G3; sequence DSPG. Residues 146–149 and 181–183 each bind GTP; these read NKIE and SAL. A G4 region spans residues 146-149; it reads NKIE. The tract at residues 181 to 183 is G5; that stretch reads SAL.

The protein belongs to the TRAFAC class translation factor GTPase superfamily. Classic translation factor GTPase family. EIF2G subfamily. In terms of assembly, heterotrimer composed of an alpha, a beta and a gamma chain. It depends on Mg(2+) as a cofactor.

It catalyses the reaction GTP + H2O = GDP + phosphate + H(+). Functionally, eIF-2 functions in the early steps of protein synthesis by forming a ternary complex with GTP and initiator tRNA. This chain is Translation initiation factor 2 subunit gamma, found in Pyrococcus furiosus (strain ATCC 43587 / DSM 3638 / JCM 8422 / Vc1).